The chain runs to 453 residues: Homogentisate 1,2-dioxygenase (453 aa).

The Proton acceptor role is filled by His306. Fe cation is bound by residues His349 and Glu355. Positions 364 and 385 each coordinate homogentisate. His385 serves as a coordination point for Fe cation.

The protein belongs to the homogentisate dioxygenase family. As to quaternary structure, hexamer; dimer of trimers. Fe cation serves as cofactor.

The catalysed reaction is homogentisate + O2 = 4-maleylacetoacetate + H(+). It participates in amino-acid degradation; L-phenylalanine degradation; acetoacetate and fumarate from L-phenylalanine: step 4/6. In terms of biological role, involved in the catabolism of homogentisate (2,5-dihydroxyphenylacetate or 2,5-OH-PhAc), a central intermediate in the degradation of phenylalanine and tyrosine. Catalyzes the oxidative ring cleavage of the aromatic ring of homogentisate to yield maleylacetoacetate. The protein is Homogentisate 1,2-dioxygenase of Rhizobium rhizogenes (strain K84 / ATCC BAA-868) (Agrobacterium radiobacter).